A 307-amino-acid polypeptide reads, in one-letter code: Homoserine kinase (307 aa).

95 to 105 (PQSRGLGSSAS) serves as a coordination point for ATP.

This sequence belongs to the GHMP kinase family. Homoserine kinase subfamily.

The protein resides in the cytoplasm. It carries out the reaction L-homoserine + ATP = O-phospho-L-homoserine + ADP + H(+). It participates in amino-acid biosynthesis; L-threonine biosynthesis; L-threonine from L-aspartate: step 4/5. Functionally, catalyzes the ATP-dependent phosphorylation of L-homoserine to L-homoserine phosphate. This Corynebacterium aurimucosum (strain ATCC 700975 / DSM 44827 / CIP 107346 / CN-1) (Corynebacterium nigricans) protein is Homoserine kinase.